The primary structure comprises 443 residues: MTQATATAVVHDLIGVGFGPSNIALAIALQERAQAQGALEVLFLDKQGDYRWHGNTLVSQSELQISFLKDLVSLRNPTSPYSFVNYLHKHDRLVDFINLGTFYPCRMEFNDYLRWVASHFQEQSRYGEEVLRIEPMLSAGQVEALRVISRNADGEELVRTTRALVVSPGGTPRIPQVFRALKGDGRVFHHSQYLEHMAKQPCSSGKPMKIAIIGGGQSAAEAFIDLNDSYPSVQADMILRASALKPADDSPFVNEVFAPKFTDLIYSREHAERERLLREYHNTNYSVVDTDLIERIYGVFYRQKVSGIPRHAFRCMTTVERATATAQGIELALRDAGSGELSVETYDAVILATGYERQLHRQLLEPLAEYLGDHEIGRDYRLQTDERCKVAIYAQGFSQASHGLSDTLLSVLPVRAEEISGSLYQHLKPGTAARALHEHALAS.

Residues 45–53 (DKQGDYRWH) and Q64 each bind FAD. Residue K69 participates in substrate binding. An FAD-binding site is contributed by V130. NADP(+)-binding positions include 215-218 (GGQS) and R240. Substrate-binding positions include 254-257 (NEVF) and N284. 284–286 (NYS) contacts NADP(+). An FAD-binding site is contributed by 407 to 409 (TLL). S410 lines the substrate pocket.

The protein belongs to the lysine N(6)-hydroxylase/L-ornithine N(5)-oxygenase family. As to quaternary structure, homotetramer. FAD is required as a cofactor.

The protein localises to the cell inner membrane. The enzyme catalyses L-ornithine + NADPH + O2 = N(5)-hydroxy-L-ornithine + NADP(+) + H2O. It participates in siderophore biosynthesis; pyoverdin biosynthesis. Catalyzes the conversion of L-ornithine to N(5)-hydroxyornithine, the first step in the biosynthesis of all hydroxamate-containing siderophores, such as pyoverdin. Pyoverdin is a hydroxamate siderophore composed of a 6,7-dihydroxyquinoline-containing fluorescent chromophore joined to the N-terminus of a partly cyclic octapeptide (D-Ser-L-Arg-D-Ser-L-N(5)-OH-Orn-L-Lys-L-N(5)-OH-Orn-L-Thr-L-Thr in strain PAO1). Specific for NADPH, which plays a role in stabilization of the C4a-hydroperoxyflavin intermediate. The protein is L-ornithine N(5)-monooxygenase of Pseudomonas aeruginosa (strain ATCC 15692 / DSM 22644 / CIP 104116 / JCM 14847 / LMG 12228 / 1C / PRS 101 / PAO1).